The following is a 343-amino-acid chain: Uroporphyrinogen decarboxylase (343 aa).

Residues Arg21 to Arg25, Asp71, Tyr148, Ser203, and His316 each bind substrate.

This sequence belongs to the uroporphyrinogen decarboxylase family. As to quaternary structure, homodimer.

The protein localises to the cytoplasm. It catalyses the reaction uroporphyrinogen III + 4 H(+) = coproporphyrinogen III + 4 CO2. The protein operates within porphyrin-containing compound metabolism; protoporphyrin-IX biosynthesis; coproporphyrinogen-III from 5-aminolevulinate: step 4/4. In terms of biological role, catalyzes the decarboxylation of four acetate groups of uroporphyrinogen-III to yield coproporphyrinogen-III. This chain is Uroporphyrinogen decarboxylase, found in Campylobacter fetus subsp. fetus (strain 82-40).